Reading from the N-terminus, the 391-residue chain is Nicotinate phosphoribosyltransferase (391 aa).

His-216 is subject to Phosphohistidine; by autocatalysis.

This sequence belongs to the NAPRTase family. In terms of processing, transiently phosphorylated on a His residue during the reaction cycle. Phosphorylation strongly increases the affinity for substrates and increases the rate of nicotinate D-ribonucleotide production. Dephosphorylation regenerates the low-affinity form of the enzyme, leading to product release.

The enzyme catalyses nicotinate + 5-phospho-alpha-D-ribose 1-diphosphate + ATP + H2O = nicotinate beta-D-ribonucleotide + ADP + phosphate + diphosphate. Its pathway is cofactor biosynthesis; NAD(+) biosynthesis; nicotinate D-ribonucleotide from nicotinate: step 1/1. Catalyzes the synthesis of beta-nicotinate D-ribonucleotide from nicotinate and 5-phospho-D-ribose 1-phosphate at the expense of ATP. In Bordetella petrii (strain ATCC BAA-461 / DSM 12804 / CCUG 43448), this protein is Nicotinate phosphoribosyltransferase.